Reading from the N-terminus, the 499-residue chain is Glycerol kinase (499 aa).

Thr-12 lines the ADP pocket. ATP-binding residues include Thr-12, Thr-13, and Ser-14. Residue Thr-12 coordinates sn-glycerol 3-phosphate. An ADP-binding site is contributed by Arg-16. Residues Arg-82, Glu-83, Tyr-134, and Asp-243 each contribute to the sn-glycerol 3-phosphate site. Residues Arg-82, Glu-83, Tyr-134, Asp-243, and Gln-244 each contribute to the glycerol site. Thr-265 and Gly-308 together coordinate ADP. 4 residues coordinate ATP: Thr-265, Gly-308, Gln-312, and Gly-409. ADP is bound by residues Gly-409 and Asn-413.

Belongs to the FGGY kinase family. In terms of assembly, homotetramer and homodimer (in equilibrium).

It carries out the reaction glycerol + ATP = sn-glycerol 3-phosphate + ADP + H(+). It functions in the pathway polyol metabolism; glycerol degradation via glycerol kinase pathway; sn-glycerol 3-phosphate from glycerol: step 1/1. With respect to regulation, activated by phosphorylation and inhibited by fructose 1,6-bisphosphate (FBP). Key enzyme in the regulation of glycerol uptake and metabolism. Catalyzes the phosphorylation of glycerol to yield sn-glycerol 3-phosphate. The protein is Glycerol kinase of Lachnoclostridium phytofermentans (strain ATCC 700394 / DSM 18823 / ISDg) (Clostridium phytofermentans).